A 322-amino-acid polypeptide reads, in one-letter code: Transmembrane and ubiquitin-like domain-containing protein 2 (322 aa).

A helical membrane pass occupies residues valine 38 to valine 58. The segment at valine 88 to proline 168 is disordered. The span at glutamate 115–valine 130 shows a compositional bias: gly residues. The Ubiquitin-like domain maps to isoleucine 174–serine 247. The next 2 helical transmembrane spans lie at leucine 267–tryptophan 287 and phenylalanine 296–valine 316.

Its subcellular location is the membrane. In Bos taurus (Bovine), this protein is Transmembrane and ubiquitin-like domain-containing protein 2 (TMUB2).